Reading from the N-terminus, the 379-residue chain is Quinolinate synthase (379 aa).

Iminosuccinate contacts are provided by His60 and Ser81. Cys126 serves as a coordination point for [4Fe-4S] cluster. Residues 152–154 and Ser169 contribute to the iminosuccinate site; that span reads YAN. Cys213 contacts [4Fe-4S] cluster. Residues 239–241 and Thr256 each bind iminosuccinate; that span reads HPE. Cys310 serves as a coordination point for [4Fe-4S] cluster.

The protein belongs to the quinolinate synthase family. Type 1 subfamily. It depends on [4Fe-4S] cluster as a cofactor.

Its subcellular location is the cytoplasm. It catalyses the reaction iminosuccinate + dihydroxyacetone phosphate = quinolinate + phosphate + 2 H2O + H(+). The protein operates within cofactor biosynthesis; NAD(+) biosynthesis; quinolinate from iminoaspartate: step 1/1. Functionally, catalyzes the condensation of iminoaspartate with dihydroxyacetone phosphate to form quinolinate. This is Quinolinate synthase from Herminiimonas arsenicoxydans.